The following is a 503-amino-acid chain: Aromatase (503 aa).

Helical transmembrane passes span 19–39 (EVMPVATMPILLLTGFLLLVW), 51–71 (GYCMGIGPLISHCRFLWMGIG), and 303–323 (MLIAAPDTMSVSVFFMLFLIA). Residues aspartate 309 and methionine 374 each contribute to the substrate site. Cysteine 437 serves as a coordination point for heme.

Belongs to the cytochrome P450 family. The cofactor is heme.

It is found in the endoplasmic reticulum membrane. The protein resides in the microsome membrane. The catalysed reaction is testosterone + 3 reduced [NADPH--hemoprotein reductase] + 3 O2 = 17beta-estradiol + formate + 3 oxidized [NADPH--hemoprotein reductase] + 4 H2O + 4 H(+). The enzyme catalyses androst-4-ene-3,17-dione + 3 reduced [NADPH--hemoprotein reductase] + 3 O2 = estrone + formate + 3 oxidized [NADPH--hemoprotein reductase] + 4 H2O + 4 H(+). It catalyses the reaction androst-4-ene-3,17-dione + reduced [NADPH--hemoprotein reductase] + O2 = 19-hydroxyandrost-4-ene-3,17-dione + oxidized [NADPH--hemoprotein reductase] + H2O + H(+). It carries out the reaction 19-hydroxyandrost-4-ene-3,17-dione + reduced [NADPH--hemoprotein reductase] + O2 = 19-oxo-androst-4-ene-3,17-dione + oxidized [NADPH--hemoprotein reductase] + 2 H2O + H(+). The catalysed reaction is 19-oxo-androst-4-ene-3,17-dione + reduced [NADPH--hemoprotein reductase] + O2 = estrone + formate + oxidized [NADPH--hemoprotein reductase] + H2O + 2 H(+). The enzyme catalyses estrone + reduced [NADPH--hemoprotein reductase] + O2 = 2-hydroxyestrone + oxidized [NADPH--hemoprotein reductase] + H2O + H(+). It catalyses the reaction 17beta-hydroxy-5alpha-androstan-3-one + reduced [NADPH--hemoprotein reductase] + O2 = 17beta,19-dihydroxy-3-oxo-5alpha-androstanone + oxidized [NADPH--hemoprotein reductase] + H2O + H(+). It carries out the reaction 17beta,19-dihydroxy-3-oxo-5alpha-androstanone + reduced [NADPH--hemoprotein reductase] + O2 = 17beta-hydroxy-3,19-dioxo-5alpha-androstanone + oxidized [NADPH--hemoprotein reductase] + 2 H2O + H(+). The catalysed reaction is 17beta-hydroxy-3,19-dioxo-5alpha-androstanone + reduced [NADPH--hemoprotein reductase] + O2 = 17beta-hydroxy-3-oxo-19-nor-5alpha-androst-1-ene + formate + oxidized [NADPH--hemoprotein reductase] + H2O + 2 H(+). It functions in the pathway steroid hormone biosynthesis. Its function is as follows. A cytochrome P450 monooxygenase that catalyzes the conversion of C19 androgens, androst-4-ene-3,17-dione (androstenedione) and testosterone to the C18 estrogens, estrone and estradiol, respectively. Catalyzes three successive oxidations of C19 androgens: two conventional oxidations at C19 yielding 19-hydroxy and 19-oxo/19-aldehyde derivatives, followed by a third oxidative aromatization step that involves C1-beta hydrogen abstraction combined with cleavage of the C10-C19 bond to yield a phenolic A ring and formic acid. Alternatively, the third oxidative reaction yields a 19-norsteroid and formic acid. Converts dihydrotestosterone to delta1,10-dehydro 19-nordihydrotestosterone and may play a role in homeostasis of this potent androgen. Also displays 2-hydroxylase activity toward estrone. Mechanistically, uses molecular oxygen inserting one oxygen atom into a substrate, and reducing the second into a water molecule, with two electrons provided by NADPH via cytochrome P450 reductase (CPR; NADPH-ferrihemoprotein reductase). This is Aromatase (CYP19A1) from Canis lupus familiaris (Dog).